Here is a 251-residue protein sequence, read N- to C-terminus: uncharacterized protein (251 aa).

His6, His8, Glu90, His130, His154, and Asp202 together coordinate a divalent metal cation.

The protein belongs to the metallo-dependent hydrolases superfamily. TatD-type hydrolase family. It depends on a divalent metal cation as a cofactor.

This is an uncharacterized protein from Haemophilus influenzae (strain ATCC 51907 / DSM 11121 / KW20 / Rd).